Reading from the N-terminus, the 556-residue chain is Formate--tetrahydrofolate ligase (556 aa).

Residue Thr-65 to Thr-72 coordinates ATP.

The protein belongs to the formate--tetrahydrofolate ligase family.

The catalysed reaction is (6S)-5,6,7,8-tetrahydrofolate + formate + ATP = (6R)-10-formyltetrahydrofolate + ADP + phosphate. Its pathway is one-carbon metabolism; tetrahydrofolate interconversion. The chain is Formate--tetrahydrofolate ligase from Hyphomonas neptunium (strain ATCC 15444).